Consider the following 368-residue polypeptide: Alanine racemase (368 aa).

The Proton acceptor; specific for D-alanine role is filled by Lys35. At Lys35 the chain carries N6-(pyridoxal phosphate)lysine. Arg130 contacts substrate. The active-site Proton acceptor; specific for L-alanine is Tyr253. Met305 is a binding site for substrate.

It belongs to the alanine racemase family. The cofactor is pyridoxal 5'-phosphate.

It carries out the reaction L-alanine = D-alanine. The protein operates within amino-acid biosynthesis; D-alanine biosynthesis; D-alanine from L-alanine: step 1/1. In terms of biological role, catalyzes the interconversion of L-alanine and D-alanine. May also act on other amino acids. This is Alanine racemase (alr) from Cupriavidus metallidurans (strain ATCC 43123 / DSM 2839 / NBRC 102507 / CH34) (Ralstonia metallidurans).